The chain runs to 310 residues: Porphobilinogen deaminase (310 aa).

C242 is modified (S-(dipyrrolylmethanemethyl)cysteine).

It belongs to the HMBS family. In terms of assembly, monomer. Dipyrromethane serves as cofactor.

The catalysed reaction is 4 porphobilinogen + H2O = hydroxymethylbilane + 4 NH4(+). The protein operates within porphyrin-containing compound metabolism; protoporphyrin-IX biosynthesis; coproporphyrinogen-III from 5-aminolevulinate: step 2/4. Functionally, tetrapolymerization of the monopyrrole PBG into the hydroxymethylbilane pre-uroporphyrinogen in several discrete steps. The chain is Porphobilinogen deaminase from Alcanivorax borkumensis (strain ATCC 700651 / DSM 11573 / NCIMB 13689 / SK2).